We begin with the raw amino-acid sequence, 444 residues long: Retinoic acid receptor alpha-A (444 aa).

Positions 1–71 (MYESVDVNPF…PPSPPPPPRI (71 aa)) are modulating. The segment covering 35 to 46 (SIRHQHWSGSNH) has biased composition (polar residues). A disordered region spans residues 35-67 (SIRHQHWSGSNHSIETQSTSSEEIVPSPPSPPP). Residues 47-58 (SIETQSTSSEEI) show a composition bias toward low complexity. Positions 72–147 (YKPCFVCQDK…VGMSKESVRN (76 aa)) form a DNA-binding region, nuclear receptor. 2 consecutive NR C4-type zinc fingers follow at residues 75–95 (CFVC…CEGC) and 111–130 (CHRE…CQYC). The tract at residues 148-169 (DRNKKKKEEKKPECTENYTLSP) is hinge. The region spanning 170 to 404 (DTEQMIDRVR…PLIQEMLENS (235 aa)) is the NR LBD domain. The 9aaTAD signature appears at 395–403 (PLIQEMLEN). The segment at 402–444 (ENSEGLESSSGAQGSRASATTPGSCSPSLSPNSAQSSPPTQSP) is disordered.

It belongs to the nuclear hormone receptor family. NR1 subfamily. As to quaternary structure, heterodimer; with an rxr molecule. Binds DNA preferentially as a rar/rxr heterodimer. In terms of tissue distribution, in the embryo, zygotic expression largely overlaps that of rarab, with high levels in hindbrain, lateral mesoderm and tail bud. In the adult, strong expression in brain and muscle, weaker expression in ovary, liver and digestive tract.

The protein resides in the nucleus. Receptor for retinoic acid. Retinoic acid receptors bind as heterodimers to their target response elements in response to their ligands, all-trans or 9-cis retinoic acid, and regulate gene expression in various biological processes. The rar/rxr heterodimers bind to the retinoic acid response elements (RARE) composed of tandem 5'-AGGTCA-3' sites known as DR1-DR5. Required for hindbrain patterning. This is Retinoic acid receptor alpha-A from Danio rerio (Zebrafish).